Consider the following 883-residue polypeptide: Alanine--tRNA ligase (883 aa).

Zn(2+) is bound by residues H563, H567, C673, and H677.

This sequence belongs to the class-II aminoacyl-tRNA synthetase family. Zn(2+) is required as a cofactor.

It localises to the cytoplasm. The enzyme catalyses tRNA(Ala) + L-alanine + ATP = L-alanyl-tRNA(Ala) + AMP + diphosphate. Functionally, catalyzes the attachment of alanine to tRNA(Ala) in a two-step reaction: alanine is first activated by ATP to form Ala-AMP and then transferred to the acceptor end of tRNA(Ala). Also edits incorrectly charged Ser-tRNA(Ala) and Gly-tRNA(Ala) via its editing domain. The protein is Alanine--tRNA ligase of Caulobacter sp. (strain K31).